The following is a 218-amino-acid chain: MPLVVKICGLSTRATLDAALAAGADMVGFVVFPASPRHVDLALARQLGDATGDRAAKVALTVDADDALLESVIETLRPDILQLHGHESAARVAEIRRTFGLPVMKVLGVASAADLAPLPDYAAVADRILFDARAPKGASRPGGLGAVFDWQLLRDLDLALPFMVSGGLTADNVAEAVRITGAGGVDISSGVETAPGVKDPDLIRAFIRAARASQELMI.

The protein belongs to the TrpF family.

It carries out the reaction N-(5-phospho-beta-D-ribosyl)anthranilate = 1-(2-carboxyphenylamino)-1-deoxy-D-ribulose 5-phosphate. It participates in amino-acid biosynthesis; L-tryptophan biosynthesis; L-tryptophan from chorismate: step 3/5. The polypeptide is N-(5'-phosphoribosyl)anthranilate isomerase (Rhodopseudomonas palustris (strain BisB18)).